Reading from the N-terminus, the 419-residue chain is UDP-N-acetylglucosamine 1-carboxyvinyltransferase (419 aa).

22–23 (KN) serves as a coordination point for phosphoenolpyruvate. Arg-93 serves as a coordination point for UDP-N-acetyl-alpha-D-glucosamine. Cys-117 functions as the Proton donor in the catalytic mechanism. A 2-(S-cysteinyl)pyruvic acid O-phosphothioketal modification is found at Cys-117. UDP-N-acetyl-alpha-D-glucosamine contacts are provided by Asp-307 and Ile-329.

This sequence belongs to the EPSP synthase family. MurA subfamily.

It is found in the cytoplasm. The enzyme catalyses phosphoenolpyruvate + UDP-N-acetyl-alpha-D-glucosamine = UDP-N-acetyl-3-O-(1-carboxyvinyl)-alpha-D-glucosamine + phosphate. It functions in the pathway cell wall biogenesis; peptidoglycan biosynthesis. Its function is as follows. Cell wall formation. Adds enolpyruvyl to UDP-N-acetylglucosamine. This Shewanella denitrificans (strain OS217 / ATCC BAA-1090 / DSM 15013) protein is UDP-N-acetylglucosamine 1-carboxyvinyltransferase.